The sequence spans 249 residues: Coproheme decarboxylase (249 aa).

Fe-coproporphyrin III-binding positions include arginine 131, 145–149, histidine 172, glutamine 185, and serine 223; that span reads YPMNK. Tyrosine 145 is a catalytic residue.

Belongs to the ChdC family. Type 1 subfamily. The cofactor is Fe-coproporphyrin III.

It carries out the reaction Fe-coproporphyrin III + 2 H2O2 + 2 H(+) = heme b + 2 CO2 + 4 H2O. The catalysed reaction is Fe-coproporphyrin III + H2O2 + H(+) = harderoheme III + CO2 + 2 H2O. The enzyme catalyses harderoheme III + H2O2 + H(+) = heme b + CO2 + 2 H2O. The protein operates within porphyrin-containing compound metabolism; protoheme biosynthesis. Involved in coproporphyrin-dependent heme b biosynthesis. Catalyzes the decarboxylation of Fe-coproporphyrin III (coproheme) to heme b (protoheme IX), the last step of the pathway. The reaction occurs in a stepwise manner with a three-propionate intermediate. The polypeptide is Coproheme decarboxylase (Thermus thermophilus (strain ATCC BAA-163 / DSM 7039 / HB27)).